The primary structure comprises 680 residues: DNA-directed RNA polymerase subunit beta' (680 aa).

Residues C69, C71, C87, and C90 each contribute to the Zn(2+) site. The Mg(2+) site is built by D489, D491, and D493.

This sequence belongs to the RNA polymerase beta' chain family. RpoC1 subfamily. In terms of assembly, in plastids the minimal PEP RNA polymerase catalytic core is composed of four subunits: alpha, beta, beta', and beta''. When a (nuclear-encoded) sigma factor is associated with the core the holoenzyme is formed, which can initiate transcription. It depends on Mg(2+) as a cofactor. Requires Zn(2+) as cofactor.

The protein resides in the plastid. Its subcellular location is the chloroplast. It carries out the reaction RNA(n) + a ribonucleoside 5'-triphosphate = RNA(n+1) + diphosphate. Its function is as follows. DNA-dependent RNA polymerase catalyzes the transcription of DNA into RNA using the four ribonucleoside triphosphates as substrates. The protein is DNA-directed RNA polymerase subunit beta' of Manihot esculenta (Cassava).